Reading from the N-terminus, the 592-residue chain is Inactive heparanase-2 (592 aa).

Positions 1–41 (MRVLCAFPEAMPSSNSRPPACLAPGALYLALLLHLSLSSQA) are cleaved as a signal peptide. 2 N-linked (GlcNAc...) asparagine glycosylation sites follow: asparagine 254 and asparagine 392.

Belongs to the glycosyl hydrolase 79 family. In terms of assembly, interacts with HPSE. Interacts with SDC1 (via glycan chains). As to expression, widely expressed, with the highest expression in brain, mammary gland, prostate, small intestine, testis and uterus. In the central nervous system, expressed in the spinal cord, caudate nucleus, thalamus, substantia nigra, medulla oblongata, putamen and pons. In the urinary bladder, expressed in longitudinal and circular layers of detrusor muscle. Found both in normal and cancer tissues.

The protein resides in the secreted. It localises to the extracellular space. It is found in the extracellular matrix. Its function is as follows. Binds heparin and heparan sulfate with high affinity, but lacks heparanase activity. Inhibits HPSE, possibly by competing for its substrates (in vitro). This Homo sapiens (Human) protein is Inactive heparanase-2 (HPSE2).